The chain runs to 176 residues: MIAVYPGSFDPITLGHLDIIERGCNLFGSVIVAVARNPNKAPLFSVQQRIQQIQTCTQHLANLELDTFDTLTVTYTQKRQAQVLLRGLRALSDFEYELQMAHTNHSLSPHIETVFLATSNEYSFLSSSLVKEIAKFGGSVAHLVPENVAIELEECFTKTPPSVSIPPPTAPSTPTD.

Serine 8 provides a ligand contact to substrate. ATP-binding positions include 8–9 (SF) and histidine 16. Residues lysine 40, threonine 72, and arginine 86 each contribute to the substrate site. Residues 87 to 89 (GLR), glutamate 97, and 122 to 128 (YSFLSSS) contribute to the ATP site.

It belongs to the bacterial CoaD family. Homohexamer. Mg(2+) is required as a cofactor.

The protein resides in the cytoplasm. The enzyme catalyses (R)-4'-phosphopantetheine + ATP + H(+) = 3'-dephospho-CoA + diphosphate. The protein operates within cofactor biosynthesis; coenzyme A biosynthesis; CoA from (R)-pantothenate: step 4/5. Functionally, reversibly transfers an adenylyl group from ATP to 4'-phosphopantetheine, yielding dephospho-CoA (dPCoA) and pyrophosphate. The sequence is that of Phosphopantetheine adenylyltransferase from Acaryochloris marina (strain MBIC 11017).